Here is a 145-residue protein sequence, read N- to C-terminus: Large ribosomal subunit protein uL24 (145 aa).

Disordered stretches follow at residues M1–A21 and K122–E145. Residue K136 forms a Glycyl lysine isopeptide (Lys-Gly) (interchain with G-Cter in SUMO2) linkage. T139 is subject to Phosphothreonine.

Belongs to the universal ribosomal protein uL24 family. As to quaternary structure, component of the large ribosomal subunit. Interacts with DHX33. Post-translationally, ufmylated by UFL1 in response to endoplasmic reticulum stress, promoting reticulophagy of endoplasmic reticulum sheets.

It localises to the cytoplasm. Component of the large ribosomal subunit. The ribosome is a large ribonucleoprotein complex responsible for the synthesis of proteins in the cell. The chain is Large ribosomal subunit protein uL24 (RPL26) from Bos taurus (Bovine).